Here is a 1709-residue protein sequence, read N- to C-terminus: Hybrid signal transduction histidine kinase L (1709 aa).

Disordered regions lie at residues Ser52–His192, Phe206–Asp276, Thr413–Cys535, and Gln554–Asn615. Over residues Asn53–Asn87 the composition is skewed to low complexity. The segment covering Asn88–Leu100 has biased composition (basic and acidic residues). Over residues Thr106–Asn148 the composition is skewed to low complexity. Polar residues predominate over residues Ser149–Asn170. 3 stretches are compositionally biased toward low complexity: residues Thr413–Ser466, Asn486–Cys535, and Gln554–Ser576. The span at Leu585–Gln610 shows a compositional bias: polar residues. A PAS domain is found at Ala700 to Asn771. The PAC domain occupies Trp770–Leu822. The 223-residue stretch at Met837 to Lys1059 folds into the Histidine kinase domain. His840 bears the Phosphohistidine; by autocatalysis mark. Disordered stretches follow at residues Leu1068–His1112 and Gln1137–Pro1298. Composition is skewed to low complexity over residues Leu1075–His1112, Gln1137–Gln1153, and Asn1176–Gln1194. Residues His1204 to Gln1221 show a composition bias toward basic residues. 2 stretches are compositionally biased toward polar residues: residues Asn1244 to Ser1257 and Asn1275 to Pro1298. Response regulatory domains lie at Lys1312–Leu1492 and Lys1570–Gly1692. The residue at position 1366 (Asp1366) is a 4-aspartylphosphate. 2 stretches are compositionally biased toward low complexity: residues Gln1390 to Gln1412 and Lys1420 to Gly1440. The disordered stretch occupies residues Gln1390 to Gly1440. Asp1622 is modified (4-aspartylphosphate).

Post-translationally, activation probably requires transfer of a phosphate group between a histidine in the kinase core (transmitter) domain and an aspartate of the receiver domain.

The catalysed reaction is ATP + protein L-histidine = ADP + protein N-phospho-L-histidine.. In terms of biological role, acts as a receptor histidine kinase for a signal transduction pathway. This protein undergoes an ATP-dependent autophosphorylation at a conserved histidine residue in the kinase core, and a phosphoryl group is then transferred to a conserved aspartate residue in the receiver domain. The protein is Hybrid signal transduction histidine kinase L (dhkL) of Dictyostelium discoideum (Social amoeba).